We begin with the raw amino-acid sequence, 179 residues long: Large ribosomal subunit protein uL5 (179 aa).

It belongs to the universal ribosomal protein uL5 family. Part of the 50S ribosomal subunit; part of the 5S rRNA/L5/L18/L25 subcomplex. Contacts the 5S rRNA and the P site tRNA. Forms a bridge to the 30S subunit in the 70S ribosome.

This is one of the proteins that bind and probably mediate the attachment of the 5S RNA into the large ribosomal subunit, where it forms part of the central protuberance. In the 70S ribosome it contacts protein S13 of the 30S subunit (bridge B1b), connecting the 2 subunits; this bridge is implicated in subunit movement. Contacts the P site tRNA; the 5S rRNA and some of its associated proteins might help stabilize positioning of ribosome-bound tRNAs. This chain is Large ribosomal subunit protein uL5, found in Geobacillus sp. (strain WCH70).